Here is a 180-residue protein sequence, read N- to C-terminus: MASSIVSSAAVATRANGAQASMVGPFTGLKSTASFPVSRKQNLDITSIASNGGRVRCMQVWPPINMKKYETLSYLPDLSDEQLLKEVEYLLKNGWVPCLEFETEHGFVYRENNKSPGYYDGRYWTMWKLPMFGCTDATQVLAEVEEAKKAYPQAWIRIIGFDNVRQVQCISFIAYKPEGY.

The transit peptide at M1–R56 directs the protein to the chloroplast.

This sequence belongs to the RuBisCO small chain family. Heterohexadecamer of 8 large and 8 small subunits.

Its subcellular location is the plastid. The protein localises to the chloroplast. Functionally, ruBisCO catalyzes two reactions: the carboxylation of D-ribulose 1,5-bisphosphate, the primary event in carbon dioxide fixation, as well as the oxidative fragmentation of the pentose substrate. Both reactions occur simultaneously and in competition at the same active site. Although the small subunit is not catalytic it is essential for maximal activity. The polypeptide is Ribulose bisphosphate carboxylase small subunit, chloroplastic 4 (Solanum tuberosum (Potato)).